Here is a 1003-residue protein sequence, read N- to C-terminus: Alpha-1,4 glucan phosphorylase L isozyme, chloroplastic/amyloplastic (1003 aa).

A chloroplast-targeting transit peptide spans 1–64 (MASMTMRFHP…RRRSAFSVKC (64 aa)). Disordered stretches follow at residues 71-91 (KQKV…SSFA) and 526-593 (SSEE…KKLP). Residues 537–553 (GEEEETSKEGGEEEEEK) show a composition bias toward acidic residues. The segment covering 569 to 580 (EVEKAIAEKDGT) has biased composition (basic and acidic residues). Lys-849 carries the post-translational modification N6-(pyridoxal phosphate)lysine.

Belongs to the glycogen phosphorylase family. Pyridoxal 5'-phosphate is required as a cofactor. As to expression, found predominantly in cotyledons and early seed coat.

It is found in the plastid. Its subcellular location is the chloroplast. It localises to the amyloplast. The catalysed reaction is [(1-&gt;4)-alpha-D-glucosyl](n) + phosphate = [(1-&gt;4)-alpha-D-glucosyl](n-1) + alpha-D-glucose 1-phosphate. In terms of biological role, phosphorylase is an important allosteric enzyme in carbohydrate metabolism. Enzymes from different sources differ in their regulatory mechanisms and in their natural substrates. However, all known phosphorylases share catalytic and structural properties. Its function is as follows. The L isoform exhibits higher affinity for unbranched substrates such as glucan-like amylose and maltodextrin. The chain is Alpha-1,4 glucan phosphorylase L isozyme, chloroplastic/amyloplastic (PHO1) from Vicia faba (Broad bean).